A 56-amino-acid chain; its full sequence is Large ribosomal subunit protein bL33 (56 aa).

Belongs to the bacterial ribosomal protein bL33 family.

The polypeptide is Large ribosomal subunit protein bL33 (Helicobacter hepaticus (strain ATCC 51449 / 3B1)).